Consider the following 692-residue polypeptide: Highly divergent homeobox (692 aa).

The homeobox 1 DNA-binding region spans 3–63 (LRSVFTVEQQ…NKRRKMSSKS (61 aa)). Residues 117–133 (SSSSKQGTTKHTNTQIT) show a composition bias toward polar residues. The tract at residues 117–136 (SSSSKQGTTKHTNTQITEAH) is disordered. Glycyl lysine isopeptide (Lys-Gly) (interchain with G-Cter in SUMO2) cross-links involve residues lysine 137, lysine 142, lysine 146, lysine 165, lysine 174, lysine 196, lysine 214, lysine 223, and lysine 234. Residues 437-500 (ALQDRTQFSD…NRRRKYRLMG (64 aa)) constitute a DNA-binding region (homeobox 2). Disordered stretches follow at residues 505–541 (PPRGGPADFSEQPESGSLSALTPGEEAGPEVGEDNDR) and 647–692 (KDQQ…SDSL). The segment covering 676–692 (TSLSVSSLSEKNASDSL) has biased composition (polar residues).

It localises to the nucleus. The polypeptide is Highly divergent homeobox (Hdx) (Mus musculus (Mouse)).